The sequence spans 173 residues: Dual-action ribosomal maturation protein DarP (173 aa).

Belongs to the DarP family.

Its subcellular location is the cytoplasm. Its function is as follows. Member of a network of 50S ribosomal subunit biogenesis factors which assembles along the 30S-50S interface, preventing incorrect 23S rRNA structures from forming. Promotes peptidyl transferase center (PTC) maturation. This is Dual-action ribosomal maturation protein DarP from Pseudomonas fluorescens (strain ATCC BAA-477 / NRRL B-23932 / Pf-5).